A 298-amino-acid polypeptide reads, in one-letter code: uncharacterized protein (298 aa).

9 helical membrane passes run 10 to 30 (VIYT…WKLL), 36 to 56 (LDIL…VLFF), 76 to 96 (ILSL…YIWA), 101 to 121 (FLLE…LLGI), 142 to 162 (GVII…LLAF), 179 to 199 (AIGL…YLLF), 212 to 232 (GTWL…LLFA), 243 to 263 (VGIL…FVYH), and 271 to 291 (AFTF…QVKW). EamA domains are found at residues 17 to 148 (FIMW…ISAF) and 162 to 286 (FSFG…LFTF).

This sequence belongs to the EamA transporter family.

The protein resides in the cell membrane. This is an uncharacterized protein from Bacillus subtilis (strain 168).